Consider the following 141-residue polypeptide: UPF0310 protein SSA_0254 (141 aa).

Belongs to the UPF0310 family.

The polypeptide is UPF0310 protein SSA_0254 (Streptococcus sanguinis (strain SK36)).